The sequence spans 1048 residues: MAFPPRRRLRLGPRGLPLLLSGLLLPLCRAFNLDVESPAEYSGPEGSYFGFAVDFFVPSASSRMFLLVGAPKANTTQPGIVEGGQVLKCDWSSHRRCQPIEFDATGNRDYAKDDPLEFKSHQWFGASVRSKQDKILACAPLYHWRTEMKQEREPVGTCFLQDGTKTVEYAPCRSKNIDADGQGFCQGGFSIDFTKADRVLLGGPGSFYWQGQLISDQVAEIVSKYDPKVYSIKYNNQLATRTAQAIFDDSYLGYSVAVGDFNGDGIDDFVSGVPRAARTLGMVYIYDGKNMSSLHNFTGEQMAAYFGFSVAATDINGDDYADVFIGAPLFMDRGSDGKLQEVGQVSVSLQKASGDFQTIKLNGFEVFARFGSAIAPLGDLDQDGFNDIAIAAPYGGEDKKGIVYIFNGRPTGLNAVPSQILEGKWAARSMPPSFGYSMKGATDIDKNGYPDLIVGAFGVDRAVLYRARPVITVNAGLEVYPSILNQENKTCPLPGTDLKVSCFNVRFCLKADGKGALPTKLDFQVELLLDKLKQKGAIRRALFLHNRSPGHSKNMTISRGGQMQCEELIAYLRDESEFRDKLTPITIFMEYWLDYRTAADATGLQPILNQFTPANVSRQAHILLDCGEDNVCKPKLEVSVDSDQKKIYIGDDNPLTLIVKAQNQGEGAYEAELIVSIPLQADFIGVVRNSEALARLSCAFKTENQTRQVVCDLGNPMKAGTQLLAGLRFSVHQQSEMDTSVKFDLQIQSSNLFDKVSPVVSYKVDLAVLAAVEIRGVSSPDHIFLPIPNWKYKENPETEEDVGPVVQHIYELRNNGPSSFSKAMLHLQWPYKYNNNTLLYILQYDIDGPMNCTSDMEINPLRIKISNSQTSEKNDTVGGQGDRNHLITKRDLTLNEGDVHTLGCGIAECLKIVCQVGRLDRGKSAILYVRSLLWTETFMNKENQNHSYSLKSSASFNVIEFPYKNLPIEDIFNSTLVTTNVTWGIQPAPMPVPVWVIILAVLAGLLLLAVLVFVMYRMGFFKRVRPPQEEQEREQLQPHENGEGNSET.

Positions 1 to 30 (MAFPPRRRLRLGPRGLPLLLSGLLLPLCRA) are cleaved as a signal peptide. Over 31–992 (FNLDVESPAE…WGIQPAPMPV (962 aa)) the chain is Extracellular. FG-GAP repeat units follow at residues 32–98 (NLDV…RRCQ), 109–170 (DYAK…VEYA), 173–225 (RSKN…VSKY), 237–291 (QLAT…GKNM), 292–357 (SSLH…GDFQ), 358–415 (TIKL…GLNA), and 419–482 (QILE…VYPS). Residue Asn-74 is glycosylated (N-linked (GlcNAc...) asparagine). Intrachain disulfides connect Cys-89/Cys-97, Cys-138/Cys-158, and Cys-172/Cys-185. Ca(2+)-binding residues include Asp-260, Asn-262, Asp-264, Ile-266, and Asp-268. Residues Asn-290 and Asn-296 are each glycosylated (N-linked (GlcNAc...) asparagine). Positions 314, 316, 318, 320, 322, 379, 381, 383, 385, 387, 443, 445, 447, 449, and 451 each coordinate Ca(2+). Asn-488 carries an N-linked (GlcNAc...) asparagine glycan. 2 disulfide bridges follow: Cys-491–Cys-502 and Cys-508–Cys-565. 2 N-linked (GlcNAc...) asparagine glycosylation sites follow: Asn-554 and Asn-615. Disulfide bonds link Cys-626-Cys-632 and Cys-698-Cys-711. N-linked (GlcNAc...) asparagine glycans are attached at residues Asn-704, Asn-835, Asn-851, and Asn-874. Intrachain disulfides connect Cys-852–Cys-914 and Cys-904–Cys-909. Residues Asn-945, Asn-973, and Asn-980 are each glycosylated (N-linked (GlcNAc...) asparagine). The chain crosses the membrane as a helical span at residues 993–1016 (PVWVIILAVLAGLLLLAVLVFVMY). At 1017–1048 (RMGFFKRVRPPQEEQEREQLQPHENGEGNSET) the chain is on the cytoplasmic side. The short motif at 1019 to 1023 (GFFKR) is the GFFKR motif element. Basic and acidic residues predominate over residues 1027–1042 (PQEEQEREQLQPHENG). The tract at residues 1027-1048 (PQEEQEREQLQPHENGEGNSET) is disordered.

This sequence belongs to the integrin alpha chain family. Heterodimer of an alpha and a beta subunit. The alpha subunit is composed of a heavy and a light chain linked by a disulfide bond. Alpha-V (ITGAV) associates with either beta-1 (ITGB1), beta-3 (ITGB3), beta-5 (ITGB5), beta-6 (ITGB6) or beta-8 (ITGB8). Interacts with RAB25. Interacts with CIB1. Integrins ITGAV:ITGB3 and ITGAV:ITGB5 interact with FBLN5 (via N-terminus). ITGAV:ITGB3 and ITGAV:ITGB5 interact with CCN3. ITGAV:ITGB3 interacts with ADGRA2. ITGAV:ITGB3 interacts with FGF2; it is likely that FGF2 can simultaneously bind ITGAV:ITGB3 and FGF receptors. ITGAV:ITGB3 interacts with SELP (via C-type lectin domain); the interaction mediates cell-cell interaction and adhesion. ITGAV:ITGB3 is found in a ternary complex with CX3CR1 and CX3CL1. ITGAV:ITGB3 is found in a ternary complex with NRG1 and ERBB3. ITGAV:ITGB3 is found in a ternary complex with FGF1 and FGFR1. ITGAV:ITGB3 is found in a ternary complex with IGF1 and IGF1R. ITGAV:ITGB3 interacts with IGF2. ITGAV:ITGB3 and ITGAV:ITGB6 interact with FBN1. ITGAV:ITGB3 interacts with CD9, CD81 and CD151 (via second extracellular domain). ITGAV:ITGB6 interacts with TGFB1. ITGAV:ITGB3 interacts with PTN. Forms a complex with PTPRZ1 and PTN that stimulates endothelial cell migration through ITGB3 'Tyr-773' phosphorylation. Interacts with TM4SF19. In terms of assembly, (Microbial infection) Alpha-V/beta-6 and alpha-V/beta-3 bind to foot-and-mouth disease virus (FMDV) VP1 protein and acts as a receptor for this virus.

The protein localises to the cell membrane. It localises to the cell junction. Its subcellular location is the focal adhesion. Its function is as follows. The alpha-V (ITGAV) integrins are receptors for vitronectin, cytotactin, fibronectin, fibrinogen, laminin, matrix metalloproteinase-2, osteopontin, osteomodulin, prothrombin, thrombospondin, TGFB1 and vWF. They recognize the sequence R-G-D in a wide array of ligands. Alpha-V integrins may play a role in embryo implantation, angiogenesis and wound healing. ITGAV:ITGB3 binds to fractalkine (CX3CL1) and may act as its coreceptor in CX3CR1-dependent fractalkine signaling. ITGAV:ITGB3 binds to NRG1 (via EGF domain) and this binding is essential for NRG1-ERBB signaling. ITGAV:ITGB3 binds to FGF1 and this binding is essential for FGF1 signaling. ITGAV:ITGB3 binds to FGF2 and this binding is essential for FGF2 signaling. ITGAV:ITGB3 binds to IGF1 and this binding is essential for IGF1 signaling. ITGAV:ITGB3 binds to IGF2 and this binding is essential for IGF2 signaling. ITGAV:ITGB3 binds to IL1B and this binding is essential for IL1B signaling. ITGAV:ITGB3 binds to PLA2G2A via a site (site 2) which is distinct from the classical ligand-binding site (site 1) and this induces integrin conformational changes and enhanced ligand binding to site 1. ITGAV:ITGB3 and ITGAV:ITGB6 act as receptors for fibrillin-1 (FBN1) and mediate R-G-D-dependent cell adhesion to FBN1. Integrin alpha-V/beta-6 or alpha-V/beta-8 (ITGAV:ITGB6 or ITGAV:ITGB8) mediates R-G-D-dependent release of transforming growth factor beta-1 (TGF-beta-1) from regulatory Latency-associated peptide (LAP), thereby playing a key role in TGF-beta-1 activation. ITGAV:ITGB3 acts as a receptor for CD40LG. ITGAV:ITGB3 acts as a receptor for IBSP and promotes cell adhesion and migration to IBSP. The sequence is that of Integrin alpha-V (ITGAV) from Bos taurus (Bovine).